Reading from the N-terminus, the 377-residue chain is Chaperone protein DnaJ (377 aa).

Positions Asp4 to Gly69 constitute a J domain. A CR-type zinc finger spans residues Gly131–Val213. Zn(2+) contacts are provided by Cys144, Cys147, Cys161, Cys164, Cys187, Cys190, Cys201, and Cys204. CXXCXGXG motif repeat units follow at residues Cys144–Gly151, Cys161–Gly168, Cys187–Gly194, and Cys201–Gly208.

Belongs to the DnaJ family. As to quaternary structure, homodimer. The cofactor is Zn(2+).

The protein resides in the cytoplasm. Participates actively in the response to hyperosmotic and heat shock by preventing the aggregation of stress-denatured proteins and by disaggregating proteins, also in an autonomous, DnaK-independent fashion. Unfolded proteins bind initially to DnaJ; upon interaction with the DnaJ-bound protein, DnaK hydrolyzes its bound ATP, resulting in the formation of a stable complex. GrpE releases ADP from DnaK; ATP binding to DnaK triggers the release of the substrate protein, thus completing the reaction cycle. Several rounds of ATP-dependent interactions between DnaJ, DnaK and GrpE are required for fully efficient folding. Also involved, together with DnaK and GrpE, in the DNA replication of plasmids through activation of initiation proteins. The protein is Chaperone protein DnaJ of Desulfitobacterium hafniense (strain DSM 10664 / DCB-2).